The chain runs to 456 residues: Bifunctional protein GlmU (456 aa).

The interval 1–228 is pyrophosphorylase; the sequence is MPQNTLNTVI…SHLAAGVNNK (228 aa). UDP-N-acetyl-alpha-D-glucosamine is bound by residues 11 to 14, K25, Q75, 80 to 81, 102 to 104, G138, E153, N168, and N226; these read LAAG, GT, and YGD. Mg(2+) is bound at residue D104. N226 contacts Mg(2+). Residues 229 to 249 form a linker region; sequence RQLAELERIFQTEQAQELLKA. Residues 250-456 form an N-acetyltransferase region; that stretch reads GVTLRDPARF…GWMRPEKDKQ (207 aa). UDP-N-acetyl-alpha-D-glucosamine is bound by residues R332 and K350. H362 acts as the Proton acceptor in catalysis. 2 residues coordinate UDP-N-acetyl-alpha-D-glucosamine: Y365 and N376. Acetyl-CoA is bound by residues A379, 385 to 386, S404, A422, and R439; that span reads NY.

The protein in the N-terminal section; belongs to the N-acetylglucosamine-1-phosphate uridyltransferase family. It in the C-terminal section; belongs to the transferase hexapeptide repeat family. Homotrimer. Requires Mg(2+) as cofactor.

The protein localises to the cytoplasm. It carries out the reaction alpha-D-glucosamine 1-phosphate + acetyl-CoA = N-acetyl-alpha-D-glucosamine 1-phosphate + CoA + H(+). It catalyses the reaction N-acetyl-alpha-D-glucosamine 1-phosphate + UTP + H(+) = UDP-N-acetyl-alpha-D-glucosamine + diphosphate. It participates in nucleotide-sugar biosynthesis; UDP-N-acetyl-alpha-D-glucosamine biosynthesis; N-acetyl-alpha-D-glucosamine 1-phosphate from alpha-D-glucosamine 6-phosphate (route II): step 2/2. The protein operates within nucleotide-sugar biosynthesis; UDP-N-acetyl-alpha-D-glucosamine biosynthesis; UDP-N-acetyl-alpha-D-glucosamine from N-acetyl-alpha-D-glucosamine 1-phosphate: step 1/1. It functions in the pathway bacterial outer membrane biogenesis; LPS lipid A biosynthesis. Catalyzes the last two sequential reactions in the de novo biosynthetic pathway for UDP-N-acetylglucosamine (UDP-GlcNAc). The C-terminal domain catalyzes the transfer of acetyl group from acetyl coenzyme A to glucosamine-1-phosphate (GlcN-1-P) to produce N-acetylglucosamine-1-phosphate (GlcNAc-1-P), which is converted into UDP-GlcNAc by the transfer of uridine 5-monophosphate (from uridine 5-triphosphate), a reaction catalyzed by the N-terminal domain. The protein is Bifunctional protein GlmU of Neisseria gonorrhoeae (strain ATCC 700825 / FA 1090).